A 214-amino-acid polypeptide reads, in one-letter code: Thiamine-phosphate synthase (214 aa).

4-amino-2-methyl-5-(diphosphooxymethyl)pyrimidine is bound by residues 39-43 (QYRFK) and asparagine 71. Mg(2+) is bound by residues aspartate 72 and aspartate 91. Serine 110 lines the 4-amino-2-methyl-5-(diphosphooxymethyl)pyrimidine pocket. 136-138 (TKT) is a binding site for 2-[(2R,5Z)-2-carboxy-4-methylthiazol-5(2H)-ylidene]ethyl phosphate. Lysine 139 contacts 4-amino-2-methyl-5-(diphosphooxymethyl)pyrimidine. Residues glycine 166 and 186–187 (VS) each bind 2-[(2R,5Z)-2-carboxy-4-methylthiazol-5(2H)-ylidene]ethyl phosphate.

Belongs to the thiamine-phosphate synthase family. Mg(2+) is required as a cofactor.

It carries out the reaction 2-[(2R,5Z)-2-carboxy-4-methylthiazol-5(2H)-ylidene]ethyl phosphate + 4-amino-2-methyl-5-(diphosphooxymethyl)pyrimidine + 2 H(+) = thiamine phosphate + CO2 + diphosphate. The catalysed reaction is 2-(2-carboxy-4-methylthiazol-5-yl)ethyl phosphate + 4-amino-2-methyl-5-(diphosphooxymethyl)pyrimidine + 2 H(+) = thiamine phosphate + CO2 + diphosphate. It catalyses the reaction 4-methyl-5-(2-phosphooxyethyl)-thiazole + 4-amino-2-methyl-5-(diphosphooxymethyl)pyrimidine + H(+) = thiamine phosphate + diphosphate. It participates in cofactor biosynthesis; thiamine diphosphate biosynthesis; thiamine phosphate from 4-amino-2-methyl-5-diphosphomethylpyrimidine and 4-methyl-5-(2-phosphoethyl)-thiazole: step 1/1. Condenses 4-methyl-5-(beta-hydroxyethyl)thiazole monophosphate (THZ-P) and 2-methyl-4-amino-5-hydroxymethyl pyrimidine pyrophosphate (HMP-PP) to form thiamine monophosphate (TMP). This Hydrogenobaculum sp. (strain Y04AAS1) protein is Thiamine-phosphate synthase.